The sequence spans 506 residues: Zinc finger and SCAN domain containing protein 4D (506 aa).

One can recognise an SCAN box domain in the interval 37–119 (SAQLNFSPSN…RFMESLTDEC (83 aa)). Residues 238–264 (SQGNSSHHVDFRSAPTPADVPMEEQPK) are disordered. C2H2-type zinc fingers lie at residues 395 to 417 (FKCE…QRTH), 424 to 446 (LLCV…EIIH), 452 to 474 (FKCS…EMIH), and 480 to 503 (YVCS…RNYH).

Highly expressed at the 2-cell stage but its expression is rapidly turned off.

It localises to the nucleus. Its subcellular location is the chromosome. The protein localises to the telomere. Its function is as follows. Transcription factor required to regulate early development. Binds telomeres and plays a key role in genomic stability by regulating telomere elongation. Acts as an activator of spontaneous telomere sister chromatid exchange (T-SCE) and telomere elongation. The sequence is that of Zinc finger and SCAN domain containing protein 4D (Zscan4d) from Mus musculus (Mouse).